A 144-amino-acid chain; its full sequence is Bombinins BLP-7/GH-2 (144 aa).

A signal peptide spans 1-18 (MNFKYIVAVSFLIASTYA). The propeptide occupies 19–43 (RSVKNDEQSLSQRDVLEEESLREIR). Asparagine amide is present on asparagine 70. The propeptide occupies 74–123 (TAEEHEVMKRLEAVMRDLDSLDYPEEASEMETRSFNQEEIANLFTKKEKR). Isoleucine amide is present on isoleucine 143.

The protein belongs to the bombinin family. Expressed by the skin glands.

It localises to the secreted. Functionally, antimicrobial peptide with activity against Gram-positive and -negative bacteria and fungi. Shows activity against P.acnes (MIC=5 uM), E.coli (MIC=5-6.3 uM), S.aureus (MIC=5-6.3 uM), M.luteus, S.cerevisiae and C.albicans (MIC=10-12.5 uM). Also reduces the production of interleukin (IL)-8 and granulocyte-macrophage colony stimulating factor (CSF2) in normal human epidermal keratinocytes (NHEKs). Shows anticancer activity against three human hepatoma cell lines. In vivo, using the rat ear edema model, suppress P.acnes-induced skin inflammation, significantly reducing the ear thickness. Shows weak hemolytic activity against human erythrocytes. In terms of biological role, shows weak antimicrobial activity but high hemolytic activity. The polypeptide is Bombinins BLP-7/GH-2 (Bombina orientalis (Oriental fire-bellied toad)).